Here is an 805-residue protein sequence, read N- to C-terminus: U-box domain-containing protein 32 (805 aa).

2 disordered regions span residues 181 to 205 (SNNR…SEKL) and 226 to 284 (EKDT…EREG). Residues 226-239 (EKDTGQLEREKVEP) show a composition bias toward basic and acidic residues. The segment covering 245–257 (FSSGSSSSFGEPV) has biased composition (low complexity). A coiled-coil region spans residues 331 to 434 (LEGLCIKESS…EVNALRRLVK (104 aa)). Residues 460 to 718 (FDPSWKLGEG…FIDRMKAPEV (259 aa)) form the Protein kinase domain. ATP-binding positions include 466 to 474 (LGEGKYGSV) and lysine 487. Residues 734 to 805 (RPPSHYLCPI…LAIQDWQNQW (72 aa)) form the U-box domain.

The protein belongs to the protein kinase superfamily. Ser/Thr protein kinase family.

The catalysed reaction is S-ubiquitinyl-[E2 ubiquitin-conjugating enzyme]-L-cysteine + [acceptor protein]-L-lysine = [E2 ubiquitin-conjugating enzyme]-L-cysteine + N(6)-ubiquitinyl-[acceptor protein]-L-lysine.. It functions in the pathway protein modification; protein ubiquitination. In terms of biological role, functions as an E3 ubiquitin ligase. The polypeptide is U-box domain-containing protein 32 (PUB32) (Arabidopsis thaliana (Mouse-ear cress)).